The following is a 441-amino-acid chain: Cortexillin-2 (441 aa).

Residues 1 to 229 (MDLNKEWEKV…VLYTSLFFHA (229 aa)) form an actin-binding region. Calponin-homology (CH) domains follow at residues 9-117 (KVQE…RKYR) and 126-231 (KSSE…HAFR). 2 coiled-coil regions span residues 229–362 (AFRA…RLGL) and 406–430 (SFEEQAKKLASKLESENILIEKYLN).

The protein belongs to the cortexillin family. As to quaternary structure, homodimer; parallel.

Its subcellular location is the cytoplasm. The protein localises to the cytoskeleton. In terms of biological role, actin-bundling protein. When linked to F-actin the actin filaments form preferentially anti-parallel bundles that associate into meshworks. Plays a major role in cytokinesis. Negatively regulates cortical localization of rapgap1. This Dictyostelium discoideum (Social amoeba) protein is Cortexillin-2 (ctxB).